The chain runs to 162 residues: Regulatory protein RecX (162 aa).

Belongs to the RecX family.

It localises to the cytoplasm. Functionally, modulates RecA activity. The chain is Regulatory protein RecX from Xanthomonas oryzae pv. oryzae (strain PXO99A).